The chain runs to 967 residues: Aminopeptidase N (967 aa).

At 2-8 (AKGFYIS) the chain is on the cytoplasmic side. The chain crosses the membrane as a helical; Signal-anchor for type II membrane protein span at residues 9–32 (KSLGILGILLGVAAVCTIIALSVV). The tract at residues 33 to 68 (YSQEKNKNANSSPVASTTPSASATTNPASATTLDQS) is cytosolic Ser/Thr-rich junction. The Extracellular segment spans residues 33-967 (YSQEKNKNAN…VLQWFTENSK (935 aa)). A disordered region spans residues 40-62 (NANSSPVASTTPSASATTNPASA). Over residues 41–62 (ANSSPVASTTPSASATTNPASA) the composition is skewed to low complexity. Positions 69–967 (KAWNRYRLPN…VLQWFTENSK (899 aa)) are metalloprotease. Residue N128 is glycosylated (N-linked (GlcNAc...) asparagine). Residue Y176 is modified to Sulfotyrosine. N234 and N265 each carry an N-linked (GlcNAc...) asparagine glycan. The segment at 288 to 295 (DYVEKQAS) is necessary and sufficient to mediate interaction with HCoV-229E. N319 carries N-linked (GlcNAc...) asparagine glycosylation. Position 352 to 356 (352 to 356 (GAMEN)) interacts with substrate. H388 lines the Zn(2+) pocket. E389 serves as the catalytic Proton acceptor. Zn(2+) contacts are provided by H392 and E411. 2 positions are modified to sulfotyrosine: Y419 and Y424. Residues N527, N573, N625, N681, and N735 are each glycosylated (N-linked (GlcNAc...) asparagine). 2 disulfide bridges follow: C761-C768 and C798-C834. N818 carries an N-linked (GlcNAc...) asparagine glycan. At Y913 the chain carries Sulfotyrosine.

This sequence belongs to the peptidase M1 family. Homodimer. Interacts with SLC6A19. As to quaternary structure, (Microbial infection) Interacts with the S1 domain of human coronavirus 229E/HCoV-229E spike protein. The cofactor is Zn(2+). In terms of processing, sulfated. N- and O-glycosylated. Post-translationally, may undergo proteolysis and give rise to a soluble form. Expressed in epithelial cells of the kidney, intestine, and respiratory tract; granulocytes, monocytes, fibroblasts, endothelial cells, cerebral pericytes at the blood-brain barrier, synaptic membranes of cells in the CNS. Also expressed in endometrial stromal cells, but not in the endometrial glandular cells. Found in the vasculature of tissues that undergo angiogenesis and in malignant gliomas and lymph node metastases from multiple tumor types but not in blood vessels of normal tissues. A soluble form has been found in plasma. It is found to be elevated in plasma and effusions of cancer patients.

The protein localises to the cell membrane. It carries out the reaction Release of an N-terminal amino acid, Xaa-|-Yaa- from a peptide, amide or arylamide. Xaa is preferably Ala, but may be most amino acids including Pro (slow action). When a terminal hydrophobic residue is followed by a prolyl residue, the two may be released as an intact Xaa-Pro dipeptide.. In terms of biological role, broad specificity aminopeptidase which plays a role in the final digestion of peptides generated from hydrolysis of proteins by gastric and pancreatic proteases. Also involved in the processing of various peptides including peptide hormones, such as angiotensin III and IV, neuropeptides, and chemokines. May also be involved the cleavage of peptides bound to major histocompatibility complex class II molecules of antigen presenting cells. May have a role in angiogenesis and promote cholesterol crystallization. May have a role in amino acid transport by acting as binding partner of amino acid transporter SLC6A19 and regulating its activity. Functionally, (Microbial infection) Acts as a receptor for human coronavirus 229E/HCoV-229E. In case of human coronavirus 229E (HCoV-229E) infection, serves as receptor for HCoV-229E spike glycoprotein. (Microbial infection) Mediates as well Human cytomegalovirus (HCMV) infection. The protein is Aminopeptidase N (ANPEP) of Homo sapiens (Human).